A 425-amino-acid chain; its full sequence is Elongation factor 1-alpha (425 aa).

A tr-type G domain is found at 5–221 (KPHMNLAVIG…DTFKEPSKPT (217 aa)). The tract at residues 14–21 (GHIDHGKS) is G1. 14 to 21 (GHIDHGKS) lines the GTP pocket. Residue serine 21 participates in Mg(2+) binding. Positions 70 to 74 (GITID) are G2. Residues 91 to 94 (DCPG) are G3. GTP-binding positions include 91 to 95 (DCPGH) and 146 to 149 (NKMD). The tract at residues 146–149 (NKMD) is G4. The interval 185–187 (SSL) is G5.

It belongs to the TRAFAC class translation factor GTPase superfamily. Classic translation factor GTPase family. EF-Tu/EF-1A subfamily.

It localises to the cytoplasm. The enzyme catalyses GTP + H2O = GDP + phosphate + H(+). Its function is as follows. GTP hydrolase that promotes the GTP-dependent binding of aminoacyl-tRNA to the A-site of ribosomes during protein biosynthesis. This Methanoregula boonei (strain DSM 21154 / JCM 14090 / 6A8) protein is Elongation factor 1-alpha.